The sequence spans 418 residues: UDP-N-acetylglucosamine 1-carboxyvinyltransferase (418 aa).

23–24 (KN) contacts phosphoenolpyruvate. A UDP-N-acetyl-alpha-D-glucosamine-binding site is contributed by arginine 92. Residue cysteine 116 is the Proton donor of the active site. Position 116 is a 2-(S-cysteinyl)pyruvic acid O-phosphothioketal (cysteine 116). UDP-N-acetyl-alpha-D-glucosamine is bound by residues 121–125 (RPVDL), 161–164 (KVSV), aspartate 306, and isoleucine 328.

This sequence belongs to the EPSP synthase family. MurA subfamily.

The protein resides in the cytoplasm. The catalysed reaction is phosphoenolpyruvate + UDP-N-acetyl-alpha-D-glucosamine = UDP-N-acetyl-3-O-(1-carboxyvinyl)-alpha-D-glucosamine + phosphate. It participates in cell wall biogenesis; peptidoglycan biosynthesis. Its function is as follows. Cell wall formation. Adds enolpyruvyl to UDP-N-acetylglucosamine. This is UDP-N-acetylglucosamine 1-carboxyvinyltransferase from Vibrio parahaemolyticus serotype O3:K6 (strain RIMD 2210633).